We begin with the raw amino-acid sequence, 184 residues long: SsrA-binding protein (184 aa).

Positions 1–11 (MAAKKSTPTDS) are enriched in polar residues. The tract at residues 1-31 (MAAKKSTPTDSGKSKGKKNKAQKGAGQKGAG) is disordered.

The protein belongs to the SmpB family.

Its subcellular location is the cytoplasm. Functionally, required for rescue of stalled ribosomes mediated by trans-translation. Binds to transfer-messenger RNA (tmRNA), required for stable association of tmRNA with ribosomes. tmRNA and SmpB together mimic tRNA shape, replacing the anticodon stem-loop with SmpB. tmRNA is encoded by the ssrA gene; the 2 termini fold to resemble tRNA(Ala) and it encodes a 'tag peptide', a short internal open reading frame. During trans-translation Ala-aminoacylated tmRNA acts like a tRNA, entering the A-site of stalled ribosomes, displacing the stalled mRNA. The ribosome then switches to translate the ORF on the tmRNA; the nascent peptide is terminated with the 'tag peptide' encoded by the tmRNA and targeted for degradation. The ribosome is freed to recommence translation, which seems to be the essential function of trans-translation. This Corynebacterium jeikeium (strain K411) protein is SsrA-binding protein.